The chain runs to 219 residues: Deoxyribose-phosphate aldolase 1 (219 aa).

The active-site Proton donor/acceptor is the aspartate 87. Lysine 149 functions as the Schiff-base intermediate with acetaldehyde in the catalytic mechanism. The Proton donor/acceptor role is filled by lysine 178.

This sequence belongs to the DeoC/FbaB aldolase family. DeoC type 1 subfamily.

The protein localises to the cytoplasm. The enzyme catalyses 2-deoxy-D-ribose 5-phosphate = D-glyceraldehyde 3-phosphate + acetaldehyde. Its pathway is carbohydrate degradation; 2-deoxy-D-ribose 1-phosphate degradation; D-glyceraldehyde 3-phosphate and acetaldehyde from 2-deoxy-alpha-D-ribose 1-phosphate: step 2/2. In terms of biological role, catalyzes a reversible aldol reaction between acetaldehyde and D-glyceraldehyde 3-phosphate to generate 2-deoxy-D-ribose 5-phosphate. This is Deoxyribose-phosphate aldolase 1 from Vibrio vulnificus (strain YJ016).